A 216-amino-acid chain; its full sequence is LexA repressor (216 aa).

The segment at residues 29–49 (RAEIAQALGFRSPNAAEDHLK) is a DNA-binding region (H-T-H motif). Active-site for autocatalytic cleavage activity residues include Ser-134 and Lys-171.

This sequence belongs to the peptidase S24 family. In terms of assembly, homodimer.

The catalysed reaction is Hydrolysis of Ala-|-Gly bond in repressor LexA.. Its function is as follows. Represses a number of genes involved in the response to DNA damage (SOS response), including recA and lexA. In the presence of single-stranded DNA, RecA interacts with LexA causing an autocatalytic cleavage which disrupts the DNA-binding part of LexA, leading to derepression of the SOS regulon and eventually DNA repair. This chain is LexA repressor, found in Bordetella bronchiseptica (strain ATCC BAA-588 / NCTC 13252 / RB50) (Alcaligenes bronchisepticus).